Reading from the N-terminus, the 486-residue chain is Vacuolar protein sorting-associated protein 73 (486 aa).

The Cytoplasmic portion of the chain corresponds to 1–26 (MNRILSSASLLSNVSMPRQNKHKITK). The chain crosses the membrane as a helical span at residues 27 to 47 (ALCYAIIVASIGSIQFGYHLS). At 48–90 (ELNAPQQVLSCSEFDIPMEGYPYDRTWLGKRGYKQCIPLNDEQ) the chain is on the mitochondrial intermembrane side. The helical transmembrane segment at 91–111 (IGIVTSVFCIGGILGSYFATS) threads the bilayer. At 112 to 119 (LANIYGRK) the chain is on the cytoplasmic side. The chain crosses the membrane as a helical span at residues 120–140 (FSSLINCTLNIVGSLIIFNSN). Topologically, residues 141–146 (SYRGLI) are mitochondrial intermembrane. A helical transmembrane segment spans residues 147–167 (IGRILVGISCGSLIVIIPLFI). Topologically, residues 168–178 (KEVAPSGWEGL) are cytoplasmic. The helical transmembrane segment at 179–199 (LGSMTQICIRLGVLLTQGIAL) threads the bilayer. The Mitochondrial intermembrane portion of the chain corresponds to 200–208 (PLTDSYRWR). Residues 209 to 229 (WILFGSFLIAVLNFFMWFIVD) traverse the membrane as a helical segment. The Cytoplasmic portion of the chain corresponds to 230–305 (ESPKWLLAHG…RDRTNVKSRH (76 aa)). A helical transmembrane segment spans residues 306–326 (VITVLLFGQQFCGINSIVLYG). The Mitochondrial intermembrane portion of the chain corresponds to 327 to 342 (TKIISQLYPQHAIRIN). Residues 343–363 (FFISMVNVLVTILVSLLIHSL) form a helical membrane-spanning segment. The Cytoplasmic portion of the chain corresponds to 364 to 366 (PRK). A helical membrane pass occupies residues 367–387 (PLLMTSTVLVSVTAFIMGIAM). Over 388 to 396 (NHNKMNLLI) the chain is Mitochondrial intermembrane. A helical membrane pass occupies residues 397-417 (VFSFIYMGVFTMGLNPLPFII). Residues 418 to 432 (MREVSKPQDMVLAQR) are Cytoplasmic-facing. A helical membrane pass occupies residues 433–453 (YGTICNWVGTFIIAYTFPIIH). Position 454 (D454) is a topological domain, mitochondrial intermembrane. The helical transmembrane segment at 455 to 475 (VLSGYVFIIFAIIACSISAFI) threads the bilayer. Residues 476–486 (WKKVPETKRSG) lie on the Cytoplasmic side of the membrane.

This sequence belongs to the major facilitator superfamily. Sugar transporter (TC 2.A.1.1) family.

The protein resides in the mitochondrion membrane. May be involved in vacuolar protein sorting. In Saccharomyces cerevisiae (strain ATCC 204508 / S288c) (Baker's yeast), this protein is Vacuolar protein sorting-associated protein 73 (VPS73).